Reading from the N-terminus, the 491-residue chain is Cytochrome P450 2B4 (491 aa).

Ser-128 carries the phosphoserine; by PKA modification. Cys-436 is a binding site for heme.

It belongs to the cytochrome P450 family. Heme serves as cofactor.

Its subcellular location is the endoplasmic reticulum membrane. It localises to the microsome membrane. The catalysed reaction is an organic molecule + reduced [NADPH--hemoprotein reductase] + O2 = an alcohol + oxidized [NADPH--hemoprotein reductase] + H2O + H(+). Cytochromes P450 are a group of heme-thiolate monooxygenases. In liver microsomes, this enzyme is involved in an NADPH-dependent electron transport pathway. It oxidizes a variety of structurally unrelated compounds, including steroids, fatty acids, and xenobiotics. In the epoxidation of arachidonic acid it has a unique preference for the 5,6-olefin. This chain is Cytochrome P450 2B4 (CYP2B4), found in Oryctolagus cuniculus (Rabbit).